A 290-amino-acid chain; its full sequence is 4-diphosphocytidyl-2-C-methyl-D-erythritol kinase (290 aa).

Residue lysine 13 is part of the active site. 93–103 (PVQAGLGGGSA) lines the ATP pocket. The active site involves aspartate 135.

Belongs to the GHMP kinase family. IspE subfamily.

It carries out the reaction 4-CDP-2-C-methyl-D-erythritol + ATP = 4-CDP-2-C-methyl-D-erythritol 2-phosphate + ADP + H(+). The protein operates within isoprenoid biosynthesis; isopentenyl diphosphate biosynthesis via DXP pathway; isopentenyl diphosphate from 1-deoxy-D-xylulose 5-phosphate: step 3/6. Catalyzes the phosphorylation of the position 2 hydroxy group of 4-diphosphocytidyl-2C-methyl-D-erythritol. This is 4-diphosphocytidyl-2-C-methyl-D-erythritol kinase from Desulfitobacterium hafniense (strain Y51).